Reading from the N-terminus, the 266-residue chain is Translation initiation factor 2 subunit alpha (266 aa).

One can recognise an S1 motif domain in the interval Gly12–Lys83.

It belongs to the eIF-2-alpha family. As to quaternary structure, heterotrimer composed of an alpha, a beta and a gamma chain.

Its function is as follows. eIF-2 functions in the early steps of protein synthesis by forming a ternary complex with GTP and initiator tRNA. This is Translation initiation factor 2 subunit alpha (eif2a) from Methanocaldococcus jannaschii (strain ATCC 43067 / DSM 2661 / JAL-1 / JCM 10045 / NBRC 100440) (Methanococcus jannaschii).